The sequence spans 125 residues: RxLR effector protein Avh6 (125 aa).

Residues 1 to 25 (MRLSSTTFVVLAAVLLASGTAVSKA) form the signal peptide. The RxLR-dEER motif lies at 48–70 (RFLRSHHTEDGEAKLSNYDNEER).

This sequence belongs to the RxLR effector family.

The protein localises to the secreted. The protein resides in the host cell. In terms of biological role, effector that suppresses plant defense responses during the early stages of pathogen infection. Suppresses cell death induced by effectors and PAMPs in plant hosts. Triggers a hypersensitive response (HR) in the presence of Rps1d. Suppresses BAX-induced cell death and enhan,ced P.capsici infection in Nicotiana benthamiana. Also suppresses effector-triggered immunity induction by associating with Avr1b and Rps1b, suggesting a role in suppressing plant immunity. The polypeptide is RxLR effector protein Avh6 (Phytophthora sojae (strain P6497) (Soybean stem and root rot agent)).